Reading from the N-terminus, the 193-residue chain is Potassium-transporting ATPase KdpC subunit (193 aa).

A helical membrane pass occupies residues 8 to 28; sequence VVLLIFLTLITGVAYPLLATG.

The protein belongs to the KdpC family. As to quaternary structure, the system is composed of three essential subunits: KdpA, KdpB and KdpC.

The protein localises to the cell inner membrane. Functionally, part of the high-affinity ATP-driven potassium transport (or Kdp) system, which catalyzes the hydrolysis of ATP coupled with the electrogenic transport of potassium into the cytoplasm. This subunit acts as a catalytic chaperone that increases the ATP-binding affinity of the ATP-hydrolyzing subunit KdpB by the formation of a transient KdpB/KdpC/ATP ternary complex. This chain is Potassium-transporting ATPase KdpC subunit, found in Photorhabdus laumondii subsp. laumondii (strain DSM 15139 / CIP 105565 / TT01) (Photorhabdus luminescens subsp. laumondii).